A 229-amino-acid polypeptide reads, in one-letter code: DNA mismatch repair protein MutH (229 aa).

This sequence belongs to the MutH family.

The protein resides in the cytoplasm. Its function is as follows. Sequence-specific endonuclease that cleaves unmethylated GATC sequences. It is involved in DNA mismatch repair. This Escherichia coli O127:H6 (strain E2348/69 / EPEC) protein is DNA mismatch repair protein MutH.